Consider the following 459-residue polypeptide: Argininosuccinate lyase (459 aa).

Belongs to the lyase 1 family. Argininosuccinate lyase subfamily.

Its subcellular location is the cytoplasm. It catalyses the reaction 2-(N(omega)-L-arginino)succinate = fumarate + L-arginine. It participates in amino-acid biosynthesis; L-arginine biosynthesis; L-arginine from L-ornithine and carbamoyl phosphate: step 3/3. This chain is Argininosuccinate lyase, found in Oceanobacillus iheyensis (strain DSM 14371 / CIP 107618 / JCM 11309 / KCTC 3954 / HTE831).